Consider the following 860-residue polypeptide: Elastin (860 aa).

A signal peptide spans 1-27; the sequence is MAGLTAVVPQPGVLLILLLNLLHPAQP. 4-hydroxyproline is present on residues Pro35 and Pro72. Pro84 carries the hydroxyproline modification. Residue Pro105 is modified to 4-hydroxyproline. Allysine occurs at positions 123 and 127. Pro217, Pro230, Pro233, and Pro253 each carry 4-hydroxyproline. 3 positions are modified to allysine: Lys299, Lys318, and Lys321. Residue Pro346 is modified to 4-hydroxyproline. Residues Lys368 and Lys371 each carry the allysine modification. A Hydroxyproline modification is found at Pro383. A 4-hydroxyproline mark is found at Pro399 and Pro405. A hydroxyproline mark is found at Pro410 and Pro415. Residues Lys431, Lys435, Lys438, Lys481, and Lys484 each carry the allysine modification. Pro498 and Pro519 each carry 4-hydroxyproline. Lys534, Lys595, Lys599, and Lys603 each carry allysine. A 4-hydroxyproline mark is found at Pro617, Pro626, Pro644, Pro653, and Pro661. An allysine mark is found at Lys668 and Lys671. The residue at position 702 (Pro702) is a 4-hydroxyproline. An allysine mark is found at Lys719, Lys723, Lys783, and Lys786. The residue at position 832 (Pro832) is a 4-hydroxyproline. Cysteines 850 and 855 form a disulfide.

It belongs to the elastin family. The polymeric elastin chains are cross-linked together into an extensible 3D network. Forms a ternary complex with BGN and MFAP2. Interacts with MFAP2 via divalent cations (calcium &gt; magnesium &gt; manganese) in a dose-dependent and saturating manner. Interacts with FBLN5 and FBN1. Forms a ternary complex with FBN1 and FBLN2 or FBLN5. Interacts with MFAP4 in a Ca (2+)-dependent manner; this interaction promotes ELN self-assembly. Interacts with EFEMP2 with moderate affinity. In terms of processing, elastin is formed through the cross-linking of its soluble precursor tropoelastin. Cross-linking is initiated through the action of lysyl oxidase on exposed lysines to form allysine. Subsequent spontaneous condensation reactions with other allysine or unmodified lysine residues result in various bi-, tri-, and tetrafunctional cross-links. The most abundant cross-links in mature elastin fibers are lysinonorleucine, allysine aldol, desmosine, and isodesmosine. Hydroxylation on proline residues within the sequence motif, GXPG, is most likely to be 4-hydroxy as this fits the requirement for 4-hydroxylation in vertebrates.

It localises to the secreted. The protein localises to the extracellular space. The protein resides in the extracellular matrix. Major structural protein of tissues such as aorta and nuchal ligament, which must expand rapidly and recover completely. Molecular determinant of the late arterial morphogenesis, stabilizing arterial structure by regulating proliferation and organization of vascular smooth muscle. This is Elastin (Eln) from Mus musculus (Mouse).